The sequence spans 214 residues: Adenylate kinase (214 aa).

Residue 10-15 (GAGKGT) participates in ATP binding. The NMP stretch occupies residues 30–59 (STGDMLRAAVKAGTPLGLEAKKVMDAGQLV). AMP is bound by residues Thr31, Arg36, 57–59 (QLV), 85–88 (GFPR), and Gln92. Positions 122–159 (GRRVHPGSGRVYHVVFNPPKVEGKDDVTGEDLAIRPDD) are LID. Residues Arg123 and 132–133 (VY) each bind ATP. 2 residues coordinate AMP: Arg156 and Arg167. Gln200 contributes to the ATP binding site.

The protein belongs to the adenylate kinase family. As to quaternary structure, monomer.

It is found in the cytoplasm. The catalysed reaction is AMP + ATP = 2 ADP. Its pathway is purine metabolism; AMP biosynthesis via salvage pathway; AMP from ADP: step 1/1. In terms of biological role, catalyzes the reversible transfer of the terminal phosphate group between ATP and AMP. Plays an important role in cellular energy homeostasis and in adenine nucleotide metabolism. The chain is Adenylate kinase from Shewanella sp. (strain ANA-3).